Here is a 489-residue protein sequence, read N- to C-terminus: Occludin (489 aa).

Topologically, residues 1 to 51 are cytoplasmic; sequence MMYEKRSYTGYGHPSSHYDYPPPSGPPGSFYLADVPPQHFYQWRSPPGIVR. One can recognise an MARVEL domain in the interval 45–248; it reads SPPGIVRILQ…ICYFAQKTRH (204 aa). The chain crosses the membrane as a helical span at residues 52-74; the sequence is ILQGSVVILCLVIFACVASTLAW. Residues 75 to 112 lie on the Extracellular side of the membrane; the sequence is EYYGSGGLLGYGGGLGSYYNGYYGGYNGYYYGGLTNPR. A helical transmembrane segment spans residues 113–137; the sequence is AANGFMIAMAVLCFLVTLGLVIAGL. At 138–147 the chain is on the cytoplasmic side; that stretch reads SKASGARSRR. Residues 148–172 form a helical membrane-spanning segment; it reads FYLLVAVLSGLLAFVMLIASIVYVV. The Extracellular portion of the chain corresponds to 173-222; it reads GVNPRAGLGASSGSLYYNQMLMLCNQMMSPVAGGIMNQYLYHYCMVDPQE. Cys196 and Cys216 are disulfide-bonded. Residues 223 to 244 traverse the membrane as a helical segment; that stretch reads AVAIVCGFLTVILLCVICYFAQ. Residues 245–489 lie on the Cytoplasmic side of the membrane; the sequence is KTRHKIWKYG…MVGGYDQSRS (245 aa). Ser280 is modified (phosphoserine). A Phosphothreonine modification is found at Thr285. Residue Ser300 is modified to Phosphoserine. The disordered stretch occupies residues 308–382; sequence PAQENGYGHS…ESSGEQNRDD (75 aa). Positions 322–332 are enriched in pro residues; sequence PSVPPPEGPSP. Basic residues predominate over residues 345–354; that stretch reads PARRGHRQRP. A phosphotyrosine mark is found at Tyr364 and Tyr368. Positions 365–377 are enriched in polar residues; sequence ETDYTTAAESSGE. Thr369 and Thr370 each carry phosphothreonine; by PKC/PRKCH. Ser374 bears the Phosphoserine mark. Positions 381 to 489 constitute an OCEL domain; it reads DDWASLYPPI…MVGGYDQSRS (109 aa). Positions 407 to 434 form a coiled coil; sequence LQRYKALCAEMDDIGTQLRQLSHELDCL. Ser457 carries the phosphoserine modification.

It belongs to the ELL/occludin family. As to quaternary structure, interacts with TJP1/ZO1. Interacts with VAPA. Interacts with CLDN1, CLDN6, CLDN9, CLDN11, CLDN12 and CLDN17. Interacts with PLSCR1. Interacts with LSR, ILDR1 and ILDR2. Interacts with TJP2/ZO2. Dephosphorylated by PTPRJ. As to expression, localized at tight junctions of both epithelial and endothelial cells.

It is found in the cell membrane. It localises to the cell junction. The protein localises to the tight junction. Functionally, may play a role in the formation and regulation of the tight junction (TJ) paracellular permeability barrier. The chain is Occludin (OCLN) from Potorous tridactylus (Potoroo).